The primary structure comprises 232 residues: Ribose-5-phosphate isomerase A (232 aa).

Residues 28–31, 83–86, and 96–99 contribute to the substrate site; these read TGST, DGAD, and KGGG. The active-site Proton acceptor is the glutamate 105. Residue lysine 123 coordinates substrate.

This sequence belongs to the ribose 5-phosphate isomerase family. In terms of assembly, homodimer.

It catalyses the reaction aldehydo-D-ribose 5-phosphate = D-ribulose 5-phosphate. The protein operates within carbohydrate degradation; pentose phosphate pathway; D-ribose 5-phosphate from D-ribulose 5-phosphate (non-oxidative stage): step 1/1. Functionally, catalyzes the reversible conversion of ribose-5-phosphate to ribulose 5-phosphate. The protein is Ribose-5-phosphate isomerase A of Rhizobium etli (strain ATCC 51251 / DSM 11541 / JCM 21823 / NBRC 15573 / CFN 42).